We begin with the raw amino-acid sequence, 181 residues long: CASP-like protein 1F2 (181 aa).

Over 1–18 the chain is Cytoplasmic; that stretch reads MADIETKSSQNQPLKTQN. A helical transmembrane segment spans residues 19–39; that stretch reads IFIGAQIFLRIVVIAASFAST. The Extracellular segment spans residues 40 to 70; sequence WLMLTNKQTIDIGGFVLDANYSYSPEFKFLS. An N-linked (GlcNAc...) asparagine glycan is attached at asparagine 59. A helical transmembrane segment spans residues 71–91; that stretch reads YANIVVGAFSFVSLLFLVLVG. Residues 92–100 are Cytoplasmic-facing; it reads RRSSNPTYY. The helical transmembrane segment at 101–121 threads the bilayer; the sequence is FILFLHDLALMSLVLGGCAAA. Residues 122 to 150 lie on the Extracellular side of the membrane; it reads TVIGSLGKYGNSHTGWMQICDHFGKFCKR. The helical transmembrane segment at 151 to 171 threads the bilayer; it reads ATTSVAFSYFSLVCLLILTIT. The Cytoplasmic segment spans residues 172 to 181; the sequence is SASKSRQIQV.

Belongs to the Casparian strip membrane proteins (CASP) family. As to quaternary structure, homodimer and heterodimers.

Its subcellular location is the cell membrane. The sequence is that of CASP-like protein 1F2 from Populus trichocarpa (Western balsam poplar).